Here is a 276-residue protein sequence, read N- to C-terminus: 4-deoxy-L-threo-5-hexosulose-uronate ketol-isomerase 1 (276 aa).

His194, His196, Glu201, and His243 together coordinate Zn(2+).

This sequence belongs to the KduI family. Requires Zn(2+) as cofactor.

It carries out the reaction 5-dehydro-4-deoxy-D-glucuronate = 3-deoxy-D-glycero-2,5-hexodiulosonate. The protein operates within glycan metabolism; pectin degradation; 2-dehydro-3-deoxy-D-gluconate from pectin: step 4/5. Catalyzes the isomerization of 5-dehydro-4-deoxy-D-glucuronate to 3-deoxy-D-glycero-2,5-hexodiulosonate. The sequence is that of 4-deoxy-L-threo-5-hexosulose-uronate ketol-isomerase 1 (kduI1) from Enterococcus faecalis (strain ATCC 700802 / V583).